Consider the following 889-residue polypeptide: Disease resistance protein RPS5 (889 aa).

The N-myristoyl glycine moiety is linked to residue G2. C4 carries the S-palmitoyl cysteine lipid modification. Residues 29–58 adopt a coiled-coil conformation; it reads IHNLSKNLASLQKAMRMLKARQYDVIRRLE. One can recognise an NB-ARC domain in the interval 140 to 444; that stretch reads SEATPFADVD…SEGFINEKEG (305 aa). 183-190 serves as a coordination point for ATP; it reads GMGGVGKT. LRR repeat units follow at residues 518-539, 540-561, 564-586, 588-610, 611-633, and 634-656; these read TVRK…HECA, ALTT…FFRC, HLVV…ISEL, SLRY…WTLK, KLIH…SNLW, and NLRT…KELQ.

The protein belongs to the disease resistance NB-LRR family. In uninfected plants, interacts with PBS1 through the coiled coil domain. Homodimer.

The protein resides in the cell membrane. Functionally, disease resistance (R) protein that specifically recognizes the avrPphB type III effector avirulence protein from Pseudomonas syringae. Also confers resistance against Hyaloperonospora parasitica (downy mildew). Resistance proteins guard the plant against pathogens that contain an appropriate avirulence protein via an indirect interaction with this avirulence protein. That triggers a defense system including the hypersensitive response, which restricts the pathogen growth. Requires PBS1 to trigger the defense reaction against avrPphB. In case of infection by Pseudomonas syringae, AvrPphB triggers RPS5-mediated defense mechanism via the cleavage of PBS1, suggesting that the cleavage of PBS1 could trigger an exchange of ADP for ATP, thereby activating RPS5. May function as a fine-tuned sensor of alterations in the structure of the effector target PBS1. In Arabidopsis thaliana (Mouse-ear cress), this protein is Disease resistance protein RPS5 (RPS5).